The primary structure comprises 190 residues: Xanthine phosphoribosyltransferase (190 aa).

Residues leucine 20 and asparagine 27 each coordinate xanthine. 128–132 (ANGKA) contributes to the 5-phospho-alpha-D-ribose 1-diphosphate binding site. Lysine 156 is a binding site for xanthine.

The protein belongs to the purine/pyrimidine phosphoribosyltransferase family. Xpt subfamily. Homodimer.

The protein resides in the cytoplasm. It catalyses the reaction XMP + diphosphate = xanthine + 5-phospho-alpha-D-ribose 1-diphosphate. It participates in purine metabolism; XMP biosynthesis via salvage pathway; XMP from xanthine: step 1/1. Converts the preformed base xanthine, a product of nucleic acid breakdown, to xanthosine 5'-monophosphate (XMP), so it can be reused for RNA or DNA synthesis. This chain is Xanthine phosphoribosyltransferase, found in Ruminiclostridium cellulolyticum (strain ATCC 35319 / DSM 5812 / JCM 6584 / H10) (Clostridium cellulolyticum).